A 121-amino-acid chain; its full sequence is Piercer of microtubule wall 2 protein (121 aa).

The span at 1–10 shows a compositional bias: basic and acidic residues; that stretch reads MTDRNRDKKS. Residues 1–29 are disordered; that stretch reads MTDRNRDKKSTSPSNSDTEMKSEQLPPCV.

Belongs to the PIERCE2 family. In terms of assembly, microtubule inner protein component of sperm flagellar doublet microtubules. Interacts with CFAP53, ODAD1 and ODAD3; the interactions link the outer dynein arms docking complex (ODA-DC) to the internal microtubule inner proteins (MIP) in cilium axoneme. As to expression, expressed in airway epithelial cells.

Its subcellular location is the cytoplasm. It is found in the cytoskeleton. The protein resides in the cilium axoneme. It localises to the flagellum axoneme. In terms of biological role, microtubule inner protein involved in the attachment of outer dynein arms (ODAs) to dynein-decorated doublet microtubules (DMTs) in cilia axoneme, which is required for motile cilia beating. This is Piercer of microtubule wall 2 protein from Homo sapiens (Human).